Here is a 188-residue protein sequence, read N- to C-terminus: Crossover junction endodeoxyribonuclease RuvC (188 aa).

Residues Asp14, Glu74, and Asp149 contribute to the active site. Mg(2+)-binding residues include Asp14, Glu74, and Asp149.

The protein belongs to the RuvC family. In terms of assembly, homodimer which binds Holliday junction (HJ) DNA. The HJ becomes 2-fold symmetrical on binding to RuvC with unstacked arms; it has a different conformation from HJ DNA in complex with RuvA. In the full resolvosome a probable DNA-RuvA(4)-RuvB(12)-RuvC(2) complex forms which resolves the HJ. Mg(2+) serves as cofactor.

It localises to the cytoplasm. The catalysed reaction is Endonucleolytic cleavage at a junction such as a reciprocal single-stranded crossover between two homologous DNA duplexes (Holliday junction).. Functionally, the RuvA-RuvB-RuvC complex processes Holliday junction (HJ) DNA during genetic recombination and DNA repair. Endonuclease that resolves HJ intermediates. Cleaves cruciform DNA by making single-stranded nicks across the HJ at symmetrical positions within the homologous arms, yielding a 5'-phosphate and a 3'-hydroxyl group; requires a central core of homology in the junction. The consensus cleavage sequence is 5'-(A/T)TT(C/G)-3'. Cleavage occurs on the 3'-side of the TT dinucleotide at the point of strand exchange. HJ branch migration catalyzed by RuvA-RuvB allows RuvC to scan DNA until it finds its consensus sequence, where it cleaves and resolves the cruciform DNA. The polypeptide is Crossover junction endodeoxyribonuclease RuvC (Bacteroides fragilis (strain ATCC 25285 / DSM 2151 / CCUG 4856 / JCM 11019 / LMG 10263 / NCTC 9343 / Onslow / VPI 2553 / EN-2)).